A 798-amino-acid chain; its full sequence is Metabotropic glutamate receptor-like protein A (798 aa).

The N-terminal stretch at 1–23 is a signal peptide; it reads MNKLKFLIILFITFLFNLKYINS. The Extracellular portion of the chain corresponds to 24 to 388; the sequence is LKQCKISVLL…DYSNSMKLGL (365 aa). Residues asparagine 186, asparagine 275, and asparagine 320 are each glycosylated (N-linked (GlcNAc...) asparagine). A helical membrane pass occupies residues 389-409; it reads TIVSGFCILFCIISMVLVIMF. Topologically, residues 410-419 are cytoplasmic; the sequence is RHAKIIKSAS. A helical transmembrane segment spans residues 420 to 440; sequence PIFCLLILFGCIIIFSGCIIF. The Extracellular portion of the chain corresponds to 441–447; it reads SLSPTDG. Residues 448–468 traverse the membrane as a helical segment; it reads ICGARVWLLSIGYTIFLGSLL. The Cytoplasmic segment spans residues 469–494; it reads VKNWRIWLLFDNPKLKKRSITNWKLY. A helical transmembrane segment spans residues 495 to 515; sequence PFVAGILAADVLILALWQGLG. Residues 516 to 545 lie on the Extracellular side of the membrane; it reads DIRSESRIGIDSLTKYQYANVCSSNDQGSV. The helical transmembrane segment at 546-566 threads the bilayer; sequence ALYILLVFHGIKLLAACFISF. Over 567-580 the chain is Cytoplasmic; the sequence is KIKAVDIEEFNESK. Residues 581–601 form a helical membrane-spanning segment; sequence PIASSIYIITFCLFIVIPLMV. At 602-609 the chain is on the extracellular side; the sequence is SPQSVASQ. Residues 610–630 traverse the membrane as a helical segment; sequence VITIVVCAIVTTLISISLLFG. Residues 631–798 lie on the Cytoplasmic side of the membrane; it reads SKFYMMATQG…NQSEIDPDDV (168 aa). The stretch at 714 to 771 forms a coiled coil; the sequence is AEQDSKLDLENQNDENEIENNQNNQNNIVEDCQKVEKLEKDENLEKDENLEKDENLEK. The span at 752–774 shows a compositional bias: basic and acidic residues; the sequence is EKDENLEKDENLEKDENLEKDNE. Residues 752–798 are disordered; the sequence is EKDENLEKDENLEKDENLEKDNENQSIIQKKRLSKNFNQSEIDPDDV.

The protein in the N-terminal section; belongs to the BMP lipoprotein family. This sequence in the C-terminal section; belongs to the G-protein coupled receptor 3 family. GABA-B receptor subfamily.

It is found in the membrane. It localises to the cytoplasm. Its subcellular location is the cell cortex. The protein resides in the perinuclear region. Functionally, may play an important role in the terminal differentiation. The protein is Metabotropic glutamate receptor-like protein A (grlA) of Dictyostelium discoideum (Social amoeba).